We begin with the raw amino-acid sequence, 292 residues long: Non-homologous end joining protein Ku (292 aa).

The Ku domain maps to 12–196; that stretch reads KLSLVTCPVV…KITKDMVELA (185 aa). The interval 231–292 is disordered; sequence KPIKLPEPEE…RSAARQRKAG (62 aa). Residues 271-292 show a composition bias toward basic residues; that stretch reads APAHRRPAKKAHRSAARQRKAG.

It belongs to the prokaryotic Ku family. Homodimer. Interacts with LigD.

Functionally, with LigD forms a non-homologous end joining (NHEJ) DNA repair enzyme, which repairs dsDNA breaks with reduced fidelity. Binds linear dsDNA with 5'- and 3'- overhangs but not closed circular dsDNA nor ssDNA. Recruits and stimulates the ligase activity of LigD. In Bradyrhizobium sp. (strain ORS 278), this protein is Non-homologous end joining protein Ku.